The chain runs to 169 residues: Peptide methionine sulfoxide reductase MsrA (169 aa).

Residue Cys10 is part of the active site.

Belongs to the MsrA Met sulfoxide reductase family.

It catalyses the reaction L-methionyl-[protein] + [thioredoxin]-disulfide + H2O = L-methionyl-(S)-S-oxide-[protein] + [thioredoxin]-dithiol. The enzyme catalyses [thioredoxin]-disulfide + L-methionine + H2O = L-methionine (S)-S-oxide + [thioredoxin]-dithiol. Has an important function as a repair enzyme for proteins that have been inactivated by oxidation. Catalyzes the reversible oxidation-reduction of methionine sulfoxide in proteins to methionine. The chain is Peptide methionine sulfoxide reductase MsrA from Streptococcus uberis (strain ATCC BAA-854 / 0140J).